The sequence spans 145 residues: 3-hydroxyacyl-[acyl-carrier-protein] dehydratase FabZ (145 aa).

H47 is an active-site residue.

The protein belongs to the thioester dehydratase family. FabZ subfamily.

Its subcellular location is the cytoplasm. The enzyme catalyses a (3R)-hydroxyacyl-[ACP] = a (2E)-enoyl-[ACP] + H2O. In terms of biological role, involved in unsaturated fatty acids biosynthesis. Catalyzes the dehydration of short chain beta-hydroxyacyl-ACPs and long chain saturated and unsaturated beta-hydroxyacyl-ACPs. The protein is 3-hydroxyacyl-[acyl-carrier-protein] dehydratase FabZ of Geotalea uraniireducens (strain Rf4) (Geobacter uraniireducens).